Reading from the N-terminus, the 571-residue chain is Septation ring formation regulator EzrA (571 aa).

Residues 1–3 lie on the Extracellular side of the membrane; that stretch reads MYY. Residues 4–22 traverse the membrane as a helical segment; it reads MLIGFIIVVIAVIGAGYIL. The Cytoplasmic portion of the chain corresponds to 23–571; sequence KRKHYQRINE…ASKVSVDDIE (549 aa). Coiled-coil stretches lie at residues 102–147, 248–298, 326–374, 400–437, and 478–529; these read ATNA…TKEK, LAQM…DTLE, DALA…ASGE, KFAE…ERER, and RIAE…ENHF.

This sequence belongs to the EzrA family.

The protein resides in the cell membrane. Negative regulator of FtsZ ring formation; modulates the frequency and position of FtsZ ring formation. Inhibits FtsZ ring formation at polar sites. Interacts either with FtsZ or with one of its binding partners to promote depolymerization. This chain is Septation ring formation regulator EzrA, found in Listeria monocytogenes serotype 4a (strain HCC23).